Here is a 1581-residue protein sequence, read N- to C-terminus: MEAEEPEYGVSTEVPDIEELKTIPEGIMRSSQIPALDPEAQEDRDPSYKWTDGHRPVMNQSKVLRDMGDHTPNSMAIFFKKESSDMETSQEILLAEACNTPDQQEAVIQSLKDRLSRTIAAPELLACAVQEEWLDIPSKLDNRVGAELQSELMSLTLAVSKEKEEEETSPDTSIPRGSWPPCKTHPGETEQTQGSGSELLRQGKQLQLEATQENQGQEGFLQSQEAQGLEEQEGQEVEIQEEGTLNEGICFGGLLGEQEEVEEGFNGNEEEQKQGQIQSYMLLGGQWENEGLSGELEGLNYSERGQENRERRVWVLRDSEEEGQDQESREVEERRVATQYTENQRLVEKSEIVKRKQRDHDQTGKVMPVRDQKEVVDSGDRVQGNGDSGGQTAVEGSRPGEDSKPSLPVASVDPEVLSPGTLFPGISSSVADIPQIQKEPVCEELSPQAPALEPTEWSHQPISPPASFAPEESLDNRTHNSQQEEFRLRKGIEVVSASTSVAPSGTRDSPPFSPPNVFSSTATLSPVSSSVILPEETPTASASADTPHHCGPCETPPLPAKSSRYPCATSDTANPHSPLSSYTGVTQHLRSNSFPGSHRTEQTPDSLGMSLSFSHLELPQRPPKPAIYGSLTPRRNRRSRDGIVFSDSSTALFALKQDSEEFTSNPERPSSPHGSPTWGSPQNSAFAIGSPANVSSPPTVSMDMTIREALLPIPPEKRHSYSHIVERDGLLHEVASTLKRHSHPPPLTLSSGLHRSSKGSFSLVPDSTVARQHRPLPSTPESPNHTQTSIPSRLRYNKPLPPTPDMPEFYHPSISSSYISRMYRPLPPVPIIDPSSEPPPLPPKSRGRSKSIQGGVIHSGGQAKPRPNNQDWTASTLSVGRTSWPPATGRSTESLPLTSRCNNEVSPGLAFSNMTNLLSPSSPTTPWIPDLQRPTTKDESGLTEESEPPVRGSFRRSAPQEEFNNTRRSALGSRKNSEKPLHHQLEKASSWPHRRDPARTSESSSEQVVLGQVPNKQKGWNRQGLRRPSILPESSSDLRNPAAGRLPGSSDSVVFREKKPKEGMGGFSRRCSKLISSQLLYQEYSDVVLNKEIQSQQRLDSLAEPHGLSSPRHRRKALVSSDSYLQRLSMASSGSLWQEIPVVRNSTVLLSMTHEDQKLQEAKFELIVSEASYLRSLNIAVDHFQHSAQLRGTLSNQDHQWLFSRLQDVRDVSTTFLSDLEENFENNIFSFQVCDVVLNHAADFHRVYLPYVTNQTYQERTFQSLMNSNSSFREVLEKLESDPICQRLSLKSFLILPFQRITRLKLLLQNILKRTQPGSSEEAEATKAHHALEKLIRDCNSNVQRMRRTEELIYLSQKIEFECKIFPLISQSRWLVKSGELTALEFSVSPGLRRKLTTRPVHLHLFNDCLLLSRPREGSRFLVFDHAPFSSIRGEKCEMKLHGPHKNLFRLFLLHNAQGTQVEFLFRTETQSEKLRWISALAMPREELDLLECYDSPQVQCLRAYKPRENDELALEKADVVMVTQQSSDGWLEGVRLSDGEQGWFPVQQVEFISNPEVRAQNLKEAHRVKTAKLQLVEQQV.

Disordered regions lie at residues 25–54, 159–274, 316–643, 659–700, 741–810, and 829–1051; these read EGIM…TDGH, VSKE…EQKQ, LRDS…RDGI, SEEF…PPTV, HSHP…PEFY, and VPII…GSSD. Positions 41-54 are enriched in basic and acidic residues; it reads QEDRDPSYKWTDGH. The segment covering 204–221 has biased composition (polar residues); it reads KQLQLEATQENQGQEGFL. The span at 228-241 shows a compositional bias: acidic residues; the sequence is GLEEQEGQEVEIQE. Basic and acidic residues-rich tracts occupy residues 326 to 336 and 345 to 380; these read QESREVEERRV and RLVE…DSGD. Ser-446 carries the phosphoserine modification. Over residues 474 to 492 the composition is skewed to basic and acidic residues; sequence LDNRTHNSQQEEFRLRKGI. A compositionally biased stretch (polar residues) spans 496–507; that stretch reads SASTSVAPSGTR. The span at 515-531 shows a compositional bias: low complexity; sequence PNVFSSTATLSPVSSSV. Composition is skewed to polar residues over residues 569-595, 603-613, 662-685, 748-760, and 779-791; these read TSDT…NSFP, TPDSLGMSLSF, FTSN…QNSA, TLSS…SKGS, and TPES…TSIP. Residues 829–843 are compositionally biased toward pro residues; it reads VPIIDPSSEPPPLPP. 3 stretches are compositionally biased toward polar residues: residues 867 to 881, 889 to 905, and 912 to 925; these read PNNQ…SVGR, GRST…NNEV, and SNMT…SPTT. Phosphoserine occurs at positions 953 and 969. Residues 975–986 show a composition bias toward basic and acidic residues; sequence KNSEKPLHHQLE. A phosphoserine mark is found at Ser-1029 and Ser-1110. Positions 1158-1342 constitute a DH domain; it reads KLQEAKFELI…EKLIRDCNSN (185 aa). The 114-residue stretch at 1375-1488 folds into the PH domain; that stretch reads LVKSGELTAL…SALAMPREEL (114 aa). The 62-residue stretch at 1494–1555 folds into the SH3 domain; that stretch reads YDSPQVQCLR…PVQQVEFISN (62 aa).

In terms of assembly, interacts with SRC. Forms a ternary complex with SRC and the PI3K 85 kDa subunit. Interacts with and is activated by the heterodimer formed by GNB1 and GNG2. Interacts with ODAM (via C-terminus). Interacts with RHOA. Post-translationally, activation of SRC induces tyrosine phosphorylation of ARHGEF5.

The protein resides in the nucleus. Its subcellular location is the cytoplasm. It localises to the cell projection. The protein localises to the podosome. Guanine nucleotide exchange factor which activates Rho GTPases. Strongly activates RHOA. Also strongly activates RHOB, weakly activates RHOC and RHOG and shows no effect on RHOD, RHOV, RHOQ or RAC1. Involved in regulation of cell shape and actin cytoskeletal organization. Plays a role in actin organization by generating a loss of actin stress fibers and the formation of membrane ruffles and filopodia. Required for SRC-induced podosome formation. Involved in positive regulation of immature dendritic cell migration. The protein is Rho guanine nucleotide exchange factor 5 of Mus musculus (Mouse).